Here is a 200-residue protein sequence, read N- to C-terminus: Holliday junction resolvase RecU (200 aa).

Positions M1–A27 are disordered. T84, D86, E99, and Q118 together coordinate Mg(2+).

The protein belongs to the RecU family. Homodimer. Mg(2+) serves as cofactor.

It localises to the cytoplasm. It catalyses the reaction Endonucleolytic cleavage at a junction such as a reciprocal single-stranded crossover between two homologous DNA duplexes (Holliday junction).. Functionally, endonuclease that resolves Holliday junction intermediates in genetic recombination. Cleaves mobile four-strand junctions by introducing symmetrical nicks in paired strands. Promotes annealing of linear ssDNA with homologous dsDNA. Required for DNA repair, homologous recombination and chromosome segregation. This Geobacillus kaustophilus (strain HTA426) protein is Holliday junction resolvase RecU.